The sequence spans 1377 residues: DNA-directed RNA polymerase subunit beta' (1377 aa).

Zn(2+)-binding residues include Cys-70, Cys-72, Cys-85, and Cys-88. Mg(2+)-binding residues include Asp-460, Asp-462, and Asp-464. Positions 808, 882, 889, and 892 each coordinate Zn(2+).

Belongs to the RNA polymerase beta' chain family. The RNAP catalytic core consists of 2 alpha, 1 beta, 1 beta' and 1 omega subunit. When a sigma factor is associated with the core the holoenzyme is formed, which can initiate transcription. Mg(2+) serves as cofactor. Requires Zn(2+) as cofactor.

The enzyme catalyses RNA(n) + a ribonucleoside 5'-triphosphate = RNA(n+1) + diphosphate. Its function is as follows. DNA-dependent RNA polymerase catalyzes the transcription of DNA into RNA using the four ribonucleoside triphosphates as substrates. This chain is DNA-directed RNA polymerase subunit beta', found in Geotalea daltonii (strain DSM 22248 / JCM 15807 / FRC-32) (Geobacter daltonii).